A 733-amino-acid chain; its full sequence is Non-secreted LysM effector LCP1 (733 aa).

Positions Met1–Gly22 are cleaved as a signal peptide. 2 consecutive LysM domains span residues Ser211–Ile256 and Asp261–Ile309. 9 N-linked (GlcNAc...) asparagine glycosylation sites follow: Asn298, Asn304, Asn340, Asn350, Asn381, Asn432, Asn442, Asn455, and Asn538. One can recognise a LysM 3 domain in the interval Leu347–Val393. A compositionally biased stretch (low complexity) spans Ser605–Thr629. Positions Ser605–Cys637 are disordered. N-linked (GlcNAc...) asparagine glycosylation occurs at Asn630. Chitin-binding type-1 domains lie at Asp634–Ala680 and Asp688–Thr733. 8 disulfides stabilise this stretch: Cys637/Cys654, Cys645/Cys660, Cys653/Cys667, Cys671/Cys678, Cys691/Cys708, Cys699/Cys714, Cys707/Cys721, and Cys725/Cys732.

It belongs to the secreted LysM effector family.

The protein resides in the secreted. It is found in the cell membrane. The protein localises to the vacuole. In terms of biological role, secreted effector that enables the plant pathogenic fungus to manipulate host defenses for successful infection. Not involved in host recognition and penetration but suppresses host cell death and promotes fumonisin biosynthesis while the pathogen colonizes maize kernels. This is Non-secreted LysM effector LCP1 from Gibberella moniliformis (strain M3125 / FGSC 7600) (Maize ear and stalk rot fungus).